Consider the following 711-residue polypeptide: Exotoxin translocation ATP-binding protein PaxB (711 aa).

The region spanning 1-129 is the Peptidase C39 domain; sequence MEPLMSFKQK…QVFQGNVILL (129 aa). The next 5 helical transmembrane spans lie at 157–177, 195–215, 273–293, 299–319, and 392–412; these read IFVEVMIVSIFLQLFALITPL, LNVITVALAIVVIFEIVLSGL, ALTSVLDLLFSFIFFAVMWYY, IVILLSLPCYIAWSIFISPIL, and VMIINLWLGAHLVISGDLSIG. The region spanning 158-440 is the ABC transmembrane type-1 domain; that stretch reads FVEVMIVSIF…LAQLWQDFQQ (283 aa). Positions 472–707 constitute an ABC transporter domain; sequence VTFKNIRFRY…KDGLYYYLNQ (236 aa). ATP is bound at residue 506-513; the sequence is GRSGSGKS.

It belongs to the ABC transporter superfamily. Protein-1 exporter (TC 3.A.1.109) family. As to quaternary structure, homodimer.

It is found in the cell inner membrane. The catalysed reaction is ATP + H2O + proteinSide 1 = ADP + phosphate + proteinSide 2.. Its function is as follows. Part of the ABC transporter complex PaxBD involved in PaxA export. Transmembrane domains (TMD) form a pore in the inner membrane and the ATP-binding domain (NBD) is responsible for energy generation. The polypeptide is Exotoxin translocation ATP-binding protein PaxB (paxB) (Pasteurella aerogenes).